A 588-amino-acid chain; its full sequence is Aspartate--tRNA ligase (588 aa).

Glu-172 contributes to the L-aspartate binding site. The interval 196 to 199 (QLFK) is aspartate. Arg-218 serves as a coordination point for L-aspartate. Residues 218–220 (RDE) and Gln-227 contribute to the ATP site. An L-aspartate-binding site is contributed by His-449. Glu-483 provides a ligand contact to ATP. Residue Arg-490 coordinates L-aspartate. 535-538 (GLDR) contacts ATP.

It belongs to the class-II aminoacyl-tRNA synthetase family. Type 1 subfamily. Homodimer.

It localises to the cytoplasm. The enzyme catalyses tRNA(Asp) + L-aspartate + ATP = L-aspartyl-tRNA(Asp) + AMP + diphosphate. Catalyzes the attachment of L-aspartate to tRNA(Asp) in a two-step reaction: L-aspartate is first activated by ATP to form Asp-AMP and then transferred to the acceptor end of tRNA(Asp). The chain is Aspartate--tRNA ligase from Haemophilus influenzae (strain PittEE).